The primary structure comprises 883 residues: DNA mismatch repair protein MutS (883 aa).

602–609 (GPNMSGKS) lines the ATP pocket.

This sequence belongs to the DNA mismatch repair MutS family.

Functionally, this protein is involved in the repair of mismatches in DNA. It is possible that it carries out the mismatch recognition step. This protein has a weak ATPase activity. This Staphylococcus haemolyticus (strain JCSC1435) protein is DNA mismatch repair protein MutS.